We begin with the raw amino-acid sequence, 1025 residues long: Serine/threonine-protein kinase TAO2 (1025 aa).

The Protein kinase domain maps to 28 to 281 (FADLREIGHG…SDMLLKHRFL (254 aa)). ATP-binding positions include 34 to 42 (IGHGSFGAV) and lysine 57. The active-site Proton acceptor is aspartate 151. Over residues 349–373 (ESSQSVPSMSISASSQSSSVNSLAD) the composition is skewed to low complexity. The interval 349–377 (ESSQSVPSMSISASSQSSSVNSLADASDD) is disordered. Coiled-coil stretches lie at residues 457–650 (SALR…ECAM) and 755–876 (ILKR…EIEA). Disordered stretches follow at residues 899-930 (FNQG…QNTG) and 945-1025 (SASW…LSYS). The segment covering 905 to 914 (APPPGWPSRP) has biased composition (pro residues). The segment covering 947-986 (SWGLHPPGSSSSLSALPSSSSSSSSSPSSSSGGRPGLLLL) has biased composition (low complexity). Residues 1007–1025 (SRSTSVTSQLSNGSHLSYS) show a composition bias toward polar residues.

Belongs to the protein kinase superfamily. STE Ser/Thr protein kinase family. STE20 subfamily. The cofactor is Mg(2+).

It carries out the reaction L-seryl-[protein] + ATP = O-phospho-L-seryl-[protein] + ADP + H(+). The enzyme catalyses L-threonyl-[protein] + ATP = O-phospho-L-threonyl-[protein] + ADP + H(+). Functionally, serine/threonine-protein kinase involved in different processes such as apoptotic morphological changes, MAPK8/JNK and MAPK14/p38 MAPK signaling pathway. Its function is as follows. Activates the JNK MAP kinase pathway. In Xenopus laevis (African clawed frog), this protein is Serine/threonine-protein kinase TAO2 (taok2).